The chain runs to 764 residues: 5-methyltetrahydropteroyltriglutamate--homocysteine methyltransferase (764 aa).

5-methyltetrahydropteroyltri-L-glutamate is bound by residues 17 to 20 and lysine 117; that span reads RELK. Residues 436-438 and glutamate 489 each bind L-homocysteine; that span reads IGS. L-methionine-binding positions include 436–438 and glutamate 489; that span reads IGS. 5-methyltetrahydropteroyltri-L-glutamate is bound by residues 520–521 and tryptophan 566; that span reads RC. Aspartate 604 contributes to the L-homocysteine binding site. Aspartate 604 is a binding site for L-methionine. Glutamate 610 is a 5-methyltetrahydropteroyltri-L-glutamate binding site. Zn(2+)-binding residues include histidine 646, cysteine 648, and glutamate 670. The active-site Proton donor is histidine 699. Cysteine 731 is a Zn(2+) binding site.

The protein belongs to the vitamin-B12 independent methionine synthase family. It depends on Zn(2+) as a cofactor.

It carries out the reaction 5-methyltetrahydropteroyltri-L-glutamate + L-homocysteine = tetrahydropteroyltri-L-glutamate + L-methionine. It participates in amino-acid biosynthesis; L-methionine biosynthesis via de novo pathway; L-methionine from L-homocysteine (MetE route): step 1/1. Functionally, catalyzes the transfer of a methyl group from 5-methyltetrahydrofolate to homocysteine resulting in methionine formation. The sequence is that of 5-methyltetrahydropteroyltriglutamate--homocysteine methyltransferase from Baumannia cicadellinicola subsp. Homalodisca coagulata.